The chain runs to 543 residues: Methionine--tRNA ligase (543 aa).

The short motif at 13–23 is the 'HIGH' region element; sequence PYANGPLHVGH. Zn(2+)-binding residues include cysteine 145, cysteine 148, cysteine 158, and cysteine 161. The 'KMSKS' region signature appears at 334–338; the sequence is QFSKS. Lysine 337 contributes to the ATP binding site.

It belongs to the class-I aminoacyl-tRNA synthetase family. MetG type 1 subfamily. Zn(2+) serves as cofactor.

The protein resides in the cytoplasm. It catalyses the reaction tRNA(Met) + L-methionine + ATP = L-methionyl-tRNA(Met) + AMP + diphosphate. Is required not only for elongation of protein synthesis but also for the initiation of all mRNA translation through initiator tRNA(fMet) aminoacylation. The polypeptide is Methionine--tRNA ligase (Thermoplasma volcanium (strain ATCC 51530 / DSM 4299 / JCM 9571 / NBRC 15438 / GSS1)).